Consider the following 123-residue polypeptide: Holo-[acyl-carrier-protein] synthase (123 aa).

Mg(2+) contacts are provided by Asp8 and Glu56.

Belongs to the P-Pant transferase superfamily. AcpS family. Mg(2+) is required as a cofactor.

Its subcellular location is the cytoplasm. The enzyme catalyses apo-[ACP] + CoA = holo-[ACP] + adenosine 3',5'-bisphosphate + H(+). Transfers the 4'-phosphopantetheine moiety from coenzyme A to a Ser of acyl-carrier-protein. In Clostridium botulinum (strain Eklund 17B / Type B), this protein is Holo-[acyl-carrier-protein] synthase.